The primary structure comprises 30 residues: Cytochrome c3, 50 kDa (30 aa).

In terms of assembly, monomer. In terms of processing, binds 4 heme groups per subunit.

It is found in the periplasm. Functionally, participates in sulfate respiration coupled with phosphorylation by transferring electrons from the enzyme dehydrogenase to ferredoxin. This is Cytochrome c3, 50 kDa from Desulfuromonas acetoxidans (Chloropseudomonas ethylica).